Reading from the N-terminus, the 66-residue chain is Phylloseptin-S3 (66 aa).

The signal sequence occupies residues 1 to 22 (MAFLKKSLFLVLFLGLVSLSIC). A propeptide spanning residues 23 to 46 (EEEKRETEEEEHDQEEDDKSEEKR) is cleaved from the precursor. The disordered stretch occupies residues 25 to 44 (EKRETEEEEHDQEEDDKSEE). Over residues 30–41 (EEEEHDQEEDDK) the composition is skewed to acidic residues. A Phenylalanine amide modification is found at phenylalanine 65.

The protein belongs to the frog skin active peptide (FSAP) family. Phylloseptin subfamily. As to expression, expressed by the skin glands.

The protein localises to the secreted. It is found in the target cell membrane. Antimicrobial peptide with activity against the Gram-positive S.pyogenes (MIC=12.5 uM), but not against all other bacteria tested (both Gram-positive and Gram-negative). Does not show activity against fungi, and against Leishmania species. This is Phylloseptin-S3 from Phyllomedusa sauvagei (Sauvage's leaf frog).